The following is a 92-amino-acid chain: MARVTVEDCLDHVDNRFELVLVASKRARQLARQGMEPTVEWDNDKPTVVALREIAVGHVTKEILKQREQDYQTSSLDLALSTNSLNLEGFSF.

The protein belongs to the RNA polymerase subunit omega family. As to quaternary structure, the RNAP catalytic core consists of 2 alpha, 1 beta, 1 beta' and 1 omega subunit. When a sigma factor is associated with the core the holoenzyme is formed, which can initiate transcription.

The catalysed reaction is RNA(n) + a ribonucleoside 5'-triphosphate = RNA(n+1) + diphosphate. In terms of biological role, promotes RNA polymerase assembly. Latches the N- and C-terminal regions of the beta' subunit thereby facilitating its interaction with the beta and alpha subunits. This chain is DNA-directed RNA polymerase subunit omega, found in Acinetobacter baumannii (strain AB307-0294).